The sequence spans 87 residues: uncharacterized protein (87 aa).

It belongs to the YlmC/YmxH family.

This is an uncharacterized protein from Clostridium acetobutylicum (strain ATCC 824 / DSM 792 / JCM 1419 / IAM 19013 / LMG 5710 / NBRC 13948 / NRRL B-527 / VKM B-1787 / 2291 / W).